Reading from the N-terminus, the 660-residue chain is DNA ligase (660 aa).

Residues 31 to 35 (DKEYD), 79 to 80 (SL), and glutamate 111 contribute to the NAD(+) site. Catalysis depends on lysine 113, which acts as the N6-AMP-lysine intermediate. NAD(+) is bound by residues arginine 134, glutamate 168, lysine 280, and lysine 304. Residues cysteine 397, cysteine 400, cysteine 413, and cysteine 419 each coordinate Zn(2+). A BRCT domain is found at 577–660 (RQESIFSGKT…LDEAAFEALL (84 aa)).

It belongs to the NAD-dependent DNA ligase family. LigA subfamily. It depends on Mg(2+) as a cofactor. Mn(2+) is required as a cofactor.

It carries out the reaction NAD(+) + (deoxyribonucleotide)n-3'-hydroxyl + 5'-phospho-(deoxyribonucleotide)m = (deoxyribonucleotide)n+m + AMP + beta-nicotinamide D-nucleotide.. In terms of biological role, DNA ligase that catalyzes the formation of phosphodiester linkages between 5'-phosphoryl and 3'-hydroxyl groups in double-stranded DNA using NAD as a coenzyme and as the energy source for the reaction. It is essential for DNA replication and repair of damaged DNA. This chain is DNA ligase, found in Alkaliphilus metalliredigens (strain QYMF).